Here is a 202-residue protein sequence, read N- to C-terminus: Type II restriction enzyme MthZI (202 aa).

The enzyme catalyses Endonucleolytic cleavage of DNA to give specific double-stranded fragments with terminal 5'-phosphates.. Functionally, a P subtype restriction enzyme that recognizes the double-stranded sequence 5'-CTAG-3' and cleaves after C-1. The sequence is that of Type II restriction enzyme MthZI from Methanothermobacter thermautotrophicus (Methanobacterium thermoformicicum).